The sequence spans 1225 residues: Catenin delta-2 (1225 aa).

Disordered regions lie at residues 1–51 (MFAR…TSAI), 87–117 (SETGSMSSMSSAEEQFQWQSQDGQKDIEDEL), 134–242 (SGIL…HLPD), and 256–312 (SSTL…KSYS). Polar residues-rich tracts occupy residues 20–51 (QPSSASEKTSSLSPGLNTSNGDGSETETTSAI) and 98–108 (AEEQFQWQSQD). Residues 49–84 (SAILASVKEQELQFERLTRELEAERQIVASQLERCK) adopt a coiled-coil conformation. The span at 149-160 (SLLSQSALQLNS) shows a compositional bias: low complexity. Polar residues-rich tracts occupy residues 172 to 187 (YHSNQTLALGETTPSQ) and 195 to 209 (ARATGQSFSQGTTSR). Arg209 is modified (omega-N-methylarginine). Pro residues predominate over residues 217 to 229 (EPAPPPPPPPREP). Position 264 is an omega-N-methylarginine (Arg264). Ser267 and Ser276 each carry phosphoserine. 2 positions are modified to omega-N-methylarginine: Arg282 and Arg296. Over residues 299–312 (SPKQSPSRLAKSYS) the composition is skewed to polar residues. Phosphoserine occurs at positions 327, 360, 415, and 461. An ARM 1 repeat occupies 394–438 (GSRASYSSQHGHLGPELRALQSPEHHIDPIYEDRVYQKPPMRSLS). Disordered regions lie at residues 432-483 (PPMR…NAAA) and 514-542 (SPYSKSGPALPPEGTLARSPSIDSIQKDP). Residues 469–478 (LQRTGSQHGP) show a composition bias toward polar residues. Ser514 carries the phosphoserine modification. Tyr516 carries the phosphotyrosine modification. 8 ARM repeats span residues 540-579 (KDPREFGWRDPELPEVIQMLQHQFPSVQSNAAAYLQHLCF), 582-621 (NKIKAEIRRQGGIQLLVDLLDHRMTEVHRSACGALRNLVY), 626-666 (DDNK…NLSS), 682-724 (LTNA…NVSS), 728-773 (EARR…NLSY), 835-875 (PKGI…NLAA), 882-921 (VYIRAAVRKEKGLPILVELLRIDNDRVVCAVATALRNMAL), and 975-1018 (MENA…SMWQ). The disordered stretch occupies residues 1042-1077 (TIERDRQRPYSSSRTPSISPVRVSPNNRSASAPASP). Residues 1050–1059 (PYSSSRTPSI) show a composition bias toward polar residues. Phosphoserine is present on residues Ser1065 and Ser1076. Positions 1065 to 1077 (SPNNRSASAPASP) are enriched in low complexity.

Belongs to the beta-catenin family. In terms of assembly, binds to E-cadherin at a juxtamembrane site within the cytoplasmic domain. Interacts with PDZD2. Interacts with ZBTB33. Binds to PSEN1. Interacts with ARHGEF28. Interacts (via the extreme C-terminus) with FRMPD2 (via the PDZ 2 domain). Interacts with CDK5. Interacts with CTNNB1. Interacts with GSK3A and GSK3B. Interacts with DNM2. Interacts with CCDC85B. In terms of processing, O-glycosylated. Post-translationally, phosphorylated by CDK5. Phosphorylated by GSK3B. As to expression, expressed in brain; highest expression is observed in fetal brain.

Its subcellular location is the nucleus. The protein localises to the cell junction. The protein resides in the adherens junction. It is found in the cell projection. It localises to the dendrite. Its subcellular location is the perikaryon. Its function is as follows. Has a critical role in neuronal development, particularly in the formation and/or maintenance of dendritic spines and synapses. Involved in the regulation of Wnt signaling. It probably acts on beta-catenin turnover, facilitating beta-catenin interaction with GSK3B, phosphorylation, ubiquitination and degradation. Functions as a transcriptional activator when bound to ZBTB33. May be involved in neuronal cell adhesion and tissue morphogenesis and integrity by regulating adhesion molecules. This is Catenin delta-2 (CTNND2) from Homo sapiens (Human).